An 859-amino-acid polypeptide reads, in one-letter code: DNA mismatch repair protein MutS (859 aa).

622–629 contributes to the ATP binding site; it reads GPNMGGKS.

Belongs to the DNA mismatch repair MutS family.

This protein is involved in the repair of mismatches in DNA. It is possible that it carries out the mismatch recognition step. This protein has a weak ATPase activity. This is DNA mismatch repair protein MutS from Coxiella burnetii (strain Dugway 5J108-111).